Consider the following 403-residue polypeptide: PP2A regulatory subunit TAP46 (403 aa).

2 disordered regions span residues 158-184 (ERRGRSTKAAALSSPVETEEDDVLDDD) and 351-403 (ANSS…TPCG). Acidic residues-rich tracts occupy residues 174–184 (ETEEDDVLDDD) and 366–375 (EDDEEDDDDA). Residues 376-391 (AQDKARAWDDWKDDNP) show a composition bias toward basic and acidic residues.

Belongs to the IGBP1/TAP42 family. Interacts with NPP4 and NPP5, two catalytic subunits (subunit C) of PP2A.

The protein localises to the cytoplasm. Its subcellular location is the nucleus. Involved in the regulation of the TOR signaling pathway. Seems to act as a regulator of PP2A catalytic activity. This is PP2A regulatory subunit TAP46 from Nicotiana benthamiana.